Here is a 204-residue protein sequence, read N- to C-terminus: MKLLITGFDPFGGEKTNPAIEAVKRLPAAIAGATVVPLEIPTVFGTCAEVVRQAIITERPDVVLSVGQAGGRSALTPERIAINLDDGRIPDNAGFQPVDQPIQPNGPAAYFTQLPVKAMAQAIRQAGLPSHVSTTAGTYVCNHIMYQVQHLRATEFPQLQAGFIHIPFLPEQVVQRSGVPSLSLTDDVRGLTAAIRAIVIAHAD.

Residues Glu-78, Cys-141, and His-165 contribute to the active site.

Belongs to the peptidase C15 family. As to quaternary structure, homotetramer.

Its subcellular location is the cytoplasm. The enzyme catalyses Release of an N-terminal pyroglutamyl group from a polypeptide, the second amino acid generally not being Pro.. In terms of biological role, removes 5-oxoproline from various penultimate amino acid residues except L-proline. This is Pyrrolidone-carboxylate peptidase from Levilactobacillus brevis (strain ATCC 367 / BCRC 12310 / CIP 105137 / JCM 1170 / LMG 11437 / NCIMB 947 / NCTC 947) (Lactobacillus brevis).